The sequence spans 250 residues: Functional amyloid sbunit FapE (250 aa).

Positions 1-27 (MLREHAMYTHHCFVLACCLGAALPAPA) are cleaved as a signal peptide.

The protein belongs to the FapE family. In terms of assembly, a minor component of purified amyloid fibrils. Fibrils are resistant to boiling in 2% (weight/vol) SDS and require &gt;90% (vol/vol) formic acid to dissolve.

It localises to the fimbrium. It is found in the secreted. In terms of biological role, a minor component of the functional amyloid in this bacterium. Upon overexpression of the endogenous six-gene locus (fapA-fapF), cells form large clumps during liquid growth, make large amounts of biofilm and produce amyloid fibrils. In Pseudomonas aeruginosa (strain ATCC 15692 / DSM 22644 / CIP 104116 / JCM 14847 / LMG 12228 / 1C / PRS 101 / PAO1), this protein is Functional amyloid sbunit FapE.